Consider the following 489-residue polypeptide: 6-phosphogluconate dehydrogenase, decarboxylating 1 (489 aa).

NADP(+) contacts are provided by residues 9–14 and 32–34; these read GLAVMG and NRT. A Phosphoserine modification is found at Ser50. NADP(+) contacts are provided by residues 74–76 and Asn102; that span reads VKA. Substrate is bound by residues Asn102 and 128 to 130; that span reads SGG. Catalysis depends on Lys182, which acts as the Proton acceptor. Residue 185–186 participates in substrate binding; it reads HN. The active-site Proton donor is Glu189. Substrate contacts are provided by Tyr190, Lys259, Arg286, Arg446, and His452.

It belongs to the 6-phosphogluconate dehydrogenase family. As to quaternary structure, homodimer.

It localises to the cytoplasm. The enzyme catalyses 6-phospho-D-gluconate + NADP(+) = D-ribulose 5-phosphate + CO2 + NADPH. It participates in carbohydrate degradation; pentose phosphate pathway; D-ribulose 5-phosphate from D-glucose 6-phosphate (oxidative stage): step 3/3. Catalyzes the oxidative decarboxylation of 6-phosphogluconate to ribulose 5-phosphate and CO(2), with concomitant reduction of NADP to NADPH. The polypeptide is 6-phosphogluconate dehydrogenase, decarboxylating 1 (GND1) (Saccharomyces cerevisiae (strain ATCC 204508 / S288c) (Baker's yeast)).